The sequence spans 366 residues: MNIMDFNMKKLAADAGTFLSRAVQFTEEKLGQAEKTELDAHLENLLSKAECTKQWTEKIMKQTEVLLQPNPNARIEEFFYEKLDRKAPSRMNNPELLGQYMIDAGNEFGPGTAYGNALIKCGETQKQIGTADRELIQTSAINFLTPLRNFIEGDYKTITKERKLLQNKRLDLDAAKTRLKKAKVAEARAASEQEVRITQSEFDRQAEITRLLLEGISSTHAHHLRCLNDFVEAQMTYYAQCYKYMLDLQKQLGSFPSTFLSNNNQSSSAPVQSVSTPSVLASASASLPSVSNSVVTSGISELKSSSGSRKARVLYDYDAANSSELSLLADEVITVYSIPGMDSDWLMGERGNQKGKVPITYLELLN.

The interval 1–30 is membrane-binding amphipathic helix; the sequence is MNIMDFNMKKLAADAGTFLSRAVQFTEEKL. Residues 1–37 form a required for membrane binding region; sequence MNIMDFNMKKLAADAGTFLSRAVQFTEEKLGQAEKTE. In terms of domain architecture, BAR spans 27-261; that stretch reads EEKLGQAEKT…LGSFPSTFLS (235 aa). Coiled coils occupy residues 34–54 and 160–185; these read EKTE…CTKQ and KERK…AKVA. Residues 306–366 enclose the SH3 domain; the sequence is SGSRKARVLY…VPITYLELLN (61 aa).

It belongs to the endophilin family. In terms of assembly, homodimer, and heterodimer with SH3GLB2. Binds BAX. Binds DNM1, HTT, AMPH, BIN1 and ARFGAP1.

It localises to the cytoplasm. The protein resides in the golgi apparatus membrane. It is found in the mitochondrion outer membrane. May be required for normal outer mitochondrial membrane dynamics. Required for coatomer-mediated retrograde transport in certain cells. May recruit other proteins to membranes with high curvature. May promote membrane fusion. This is Endophilin-B1 from Gallus gallus (Chicken).